We begin with the raw amino-acid sequence, 206 residues long: Transmembrane emp24 domain-containing protein bai (206 aa).

The first 20 residues, M1–A20, serve as a signal peptide directing secretion. Residues V21–R172 are Lumenal-facing. The GOLD domain occupies Q30–R140. Residues V173–L193 traverse the membrane as a helical segment. Topologically, residues Y194–E206 are cytoplasmic.

This sequence belongs to the EMP24/GP25L family.

It localises to the membrane. Eca and bai are essential, though not redundant, for dorsoventral patterning of the embryo. Specifically required during early embryogenesis for the activity of maternal tkv, while the zygotic tkv is not affected. The sequence is that of Transmembrane emp24 domain-containing protein bai from Drosophila erecta (Fruit fly).